The primary structure comprises 133 residues: Small ribosomal subunit protein uS8 (133 aa).

This sequence belongs to the universal ribosomal protein uS8 family. Part of the 30S ribosomal subunit. Contacts proteins S5 and S12.

Functionally, one of the primary rRNA binding proteins, it binds directly to 16S rRNA central domain where it helps coordinate assembly of the platform of the 30S subunit. The sequence is that of Small ribosomal subunit protein uS8 from Leptospira borgpetersenii serovar Hardjo-bovis (strain JB197).